The sequence spans 210 residues: 3-hexulose-6-phosphate synthase 3 (210 aa).

It belongs to the HPS/KGPDC family. HPS subfamily.

The catalysed reaction is D-ribulose 5-phosphate + formaldehyde = D-arabino-hex-3-ulose 6-phosphate. It participates in one-carbon metabolism; formaldehyde assimilation via RuMP pathway; D-fructose 6-phosphate from D-ribulose 5-phosphate and formaldehyde: step 1/2. Catalyzes the condensation of ribulose 5-phosphate with formaldehyde to form 3-hexulose 6-phosphate. The protein is 3-hexulose-6-phosphate synthase 3 of Staphylococcus saprophyticus subsp. saprophyticus (strain ATCC 15305 / DSM 20229 / NCIMB 8711 / NCTC 7292 / S-41).